We begin with the raw amino-acid sequence, 1013 residues long: Hemoglobin-binding protein A (1013 aa).

The signal sequence occupies residues 1 to 24; it reads MTNFKFSLLACSIAFALNASTAYA. A run of 8 repeats spans residues 26 to 29, 30 to 33, 34 to 37, 38 to 41, 42 to 45, 46 to 49, 50 to 53, and 54 to 57. The tract at residues 26–57 is 8 X 4 AA tandem repeats of Q-P-T-N; that stretch reads QPTNQPTNQPTNQPTNQPTNQPTNQPTNQPTN. The span at 26–58 shows a compositional bias: low complexity; it reads QPTNQPTNQPTNQPTNQPTNQPTNQPTNQPTNQ. The segment at 26 to 61 is disordered; the sequence is QPTNQPTNQPTNQPTNQPTNQPTNQPTNQPTNQDSN. Residues 67–74 carry the TonB box motif; the sequence is EQINVSGS. The TBDR plug domain maps to 78-205; that stretch reads SDSKTPPKIA…LGGSVIYKTK (128 aa). The TBDR beta-barrel domain maps to 213–1013; sequence NKDYYVSYKK…NYKMSVQFEF (801 aa). The short motif at 996–1013 is the TonB C-terminal box element; the sequence is NRFYAPGRNYKMSVQFEF.

The protein belongs to the TonB-dependent receptor family. Hemoglobin/haptoglobin binding protein subfamily.

It localises to the cell outer membrane. In terms of biological role, acts as a receptor for hemoglobin of the human host and is required for heme uptake. The protein is Hemoglobin-binding protein A (hgbA) of Haemophilus influenzae.